The sequence spans 594 residues: SHC-transforming protein 3 (594 aa).

The interval 98-147 is disordered; it reads GSCSAPSLAAPDGSAPSAPRAPAMSAARKGRPGDEPLPRPPRGAPHASDQ. Over residues 101 to 124 the composition is skewed to low complexity; that stretch reads SAPSLAAPDGSAPSAPRAPAMSAA. In terms of domain architecture, PID spans 149-334; that stretch reads LGPGVTYVVK…LDEPWTEEEG (186 aa). Positions 335–498 are CH1; that stretch reads DGSDHPYYNS…KMLEELQAET (164 aa). 2 disordered regions span residues 351 to 373 and 386 to 405; these read PPGG…AQFA and GDTF…SSDI. The segment covering 393 to 405 has biased composition (polar residues); sequence WQQTPLRQGSSDI. Position 402 is a phosphoserine (S402). Residues 499–590 enclose the SH2 domain; the sequence is WYQGEMSRKE…GSELCLQQPV (92 aa).

As to quaternary structure, interacts with the Trk receptors in a phosphotyrosine-dependent manner. Once activated, binds to GRB2. Interacts with activated EGF receptors. Tyrosine phosphorylated. As to expression, mainly expressed in brain. Hardly detectable in other tissues, except in pancreas. Highly expressed in the cerebral cortex, frontal and temporal lobes, occipital pole, hippocampus, caudate nucleus and amygdala. Expressed at low level in the cerebellum, medulla and spinal cord.

Signaling adapter that couples activated growth factor receptors to signaling pathway in neurons. Involved in the signal transduction pathways of neurotrophin-activated Trk receptors in cortical neurons. In Homo sapiens (Human), this protein is SHC-transforming protein 3 (SHC3).